We begin with the raw amino-acid sequence, 336 residues long: Ornithine carbamoyltransferase (336 aa).

Residues 56-59 (STRT), Gln83, Arg107, and 134-137 (HPTQ) each bind carbamoyl phosphate. Residues Asn168, Asp232, and 236–237 (SM) each bind L-ornithine. Carbamoyl phosphate is bound by residues 274–275 (CL) and Arg320.

Belongs to the aspartate/ornithine carbamoyltransferase superfamily. OTCase family.

It is found in the cytoplasm. The catalysed reaction is carbamoyl phosphate + L-ornithine = L-citrulline + phosphate + H(+). It participates in amino-acid biosynthesis; L-arginine biosynthesis; L-arginine from L-ornithine and carbamoyl phosphate: step 1/3. Its function is as follows. Reversibly catalyzes the transfer of the carbamoyl group from carbamoyl phosphate (CP) to the N(epsilon) atom of ornithine (ORN) to produce L-citrulline. In Erwinia tasmaniensis (strain DSM 17950 / CFBP 7177 / CIP 109463 / NCPPB 4357 / Et1/99), this protein is Ornithine carbamoyltransferase.